A 231-amino-acid chain; its full sequence is Small ribosomal subunit protein uS3 (231 aa).

The region spanning 18–97 (VDEYLAKQFY…NPELNARVMA (80 aa)) is the KH type-2 domain.

The protein belongs to the universal ribosomal protein uS3 family. As to quaternary structure, part of the 30S ribosomal subunit.

In terms of biological role, binds the lower part of the 30S subunit head. This chain is Small ribosomal subunit protein uS3, found in Sulfolobus acidocaldarius (strain ATCC 33909 / DSM 639 / JCM 8929 / NBRC 15157 / NCIMB 11770).